Reading from the N-terminus, the 472-residue chain is 3-isopropylmalate dehydratase large subunit (472 aa).

[4Fe-4S] cluster contacts are provided by C347, C407, and C410.

Belongs to the aconitase/IPM isomerase family. LeuC type 1 subfamily. Heterodimer of LeuC and LeuD. Requires [4Fe-4S] cluster as cofactor.

It carries out the reaction (2R,3S)-3-isopropylmalate = (2S)-2-isopropylmalate. It functions in the pathway amino-acid biosynthesis; L-leucine biosynthesis; L-leucine from 3-methyl-2-oxobutanoate: step 2/4. Functionally, catalyzes the isomerization between 2-isopropylmalate and 3-isopropylmalate, via the formation of 2-isopropylmaleate. The sequence is that of 3-isopropylmalate dehydratase large subunit from Synechococcus sp. (strain CC9605).